Reading from the N-terminus, the 245-residue chain is Photosystem II protein PSBS1 (245 aa).

The transit peptide at 1 to 25 (MAMTLSTKAFAQRGVSARKNTVRVY) directs the protein to the chloroplast. 4 helical membrane passes run 72 to 92 (LFVG…EILT), 108 to 128 (GIEV…AAVL), 185 to 205 (LGFA…LAQF), and 217 to 237 (EFGL…EGSG).

It belongs to the ELIP/psbS family.

The protein resides in the plastid. The protein localises to the chloroplast thylakoid membrane. Its function is as follows. Required for non-photochemical quenching (NPQ), a mechanism that converts and dissipates the harmful excess absorbed light energy into heat and protect the photosynthetic apparatus from photo-oxidative damage. Seems involved in the activation of NPQ, possibly by promoting conformational changes required for activation of LHCSR3-dependent quenching in the antenna of photosystem II (PSII). This Chlamydomonas reinhardtii (Chlamydomonas smithii) protein is Photosystem II protein PSBS1.